Consider the following 308-residue polypeptide: Acetyl-coenzyme A carboxylase carboxyl transferase subunit beta (308 aa).

Residues 25–294 enclose the CoA carboxyltransferase N-terminal domain; it reads VWTKCTSCEQ…PLVVSVNDSP (270 aa). Residues cysteine 29, cysteine 32, cysteine 48, and cysteine 51 each coordinate Zn(2+). Residues 29-51 form a C4-type zinc finger; that stretch reads CTSCEQVLYHAELERNLEVCPKC.

The protein belongs to the AccD/PCCB family. As to quaternary structure, acetyl-CoA carboxylase is a heterohexamer composed of biotin carboxyl carrier protein (AccB), biotin carboxylase (AccC) and two subunits each of ACCase subunit alpha (AccA) and ACCase subunit beta (AccD). The cofactor is Zn(2+).

The protein localises to the cytoplasm. It catalyses the reaction N(6)-carboxybiotinyl-L-lysyl-[protein] + acetyl-CoA = N(6)-biotinyl-L-lysyl-[protein] + malonyl-CoA. Its pathway is lipid metabolism; malonyl-CoA biosynthesis; malonyl-CoA from acetyl-CoA: step 1/1. Functionally, component of the acetyl coenzyme A carboxylase (ACC) complex. Biotin carboxylase (BC) catalyzes the carboxylation of biotin on its carrier protein (BCCP) and then the CO(2) group is transferred by the transcarboxylase to acetyl-CoA to form malonyl-CoA. The protein is Acetyl-coenzyme A carboxylase carboxyl transferase subunit beta of Vibrio vulnificus (strain CMCP6).